The sequence spans 382 residues: Putative 12-oxophytodienoate reductase 3 (382 aa).

Residues 37 to 39 (PLT), Ala-70, and Gln-112 each bind FMN. Over residues 120-138 (STNDQQPNGQAPISSTDKQ) the composition is skewed to polar residues. The segment at 120–147 (STNDQQPNGQAPISSTDKQITPDDSHTV) is disordered. A substrate-binding site is contributed by 184-187 (HGAH). The active-site Proton donor is the Tyr-189. Arg-236 is an FMN binding site. Substrate is bound at residue Arg-277. Residues Gly-307 and 328–329 (GR) each bind FMN.

The protein belongs to the NADH:flavin oxidoreductase/NADH oxidase family. The cofactor is FMN.

In terms of biological role, putative oxophytodienoate reductase that may be involved in the biosynthesis or metabolism of oxylipin signaling molecules. The protein is Putative 12-oxophytodienoate reductase 3 (OPR3) of Oryza sativa subsp. japonica (Rice).